The chain runs to 800 residues: Ent-copalyl diphosphate synthase 2 (800 aa).

Positions Gln52–Ala80 are disordered. A compositionally biased stretch (basic and acidic residues) spans Glu55–Arg69. Position 242 (Lys242) interacts with substrate. Residues Asp374 and Asp376 each contribute to the Mg(2+) site. The DXDD motif signature appears at Asp374–Asp377. Residue Lys461 coordinates substrate.

It belongs to the terpene synthase family. The cofactor is Mg(2+).

The enzyme catalyses (2E,6E,10E)-geranylgeranyl diphosphate = ent-copalyl diphosphate. Its function is as follows. Catalyzes the conversion of geranylgeranyl diphosphate to the phytoalexin precursor ent-copalyl diphosphate. The chain is Ent-copalyl diphosphate synthase 2 (CPS2) from Oryza sativa subsp. indica (Rice).